A 326-amino-acid polypeptide reads, in one-letter code: DNA-directed RNA polymerase subunit alpha (326 aa).

The interval 1 to 231 (MQTNLLKPKI…DQLVVFAALE (231 aa)) is alpha N-terminal domain (alpha-NTD). The alpha C-terminal domain (alpha-CTD) stretch occupies residues 247 to 326 (VDPMLMRPVD…ESWPPANLEK (80 aa)).

It belongs to the RNA polymerase alpha chain family. In terms of assembly, homodimer. The RNAP catalytic core consists of 2 alpha, 1 beta, 1 beta' and 1 omega subunit. When a sigma factor is associated with the core the holoenzyme is formed, which can initiate transcription.

The enzyme catalyses RNA(n) + a ribonucleoside 5'-triphosphate = RNA(n+1) + diphosphate. Its function is as follows. DNA-dependent RNA polymerase catalyzes the transcription of DNA into RNA using the four ribonucleoside triphosphates as substrates. The polypeptide is DNA-directed RNA polymerase subunit alpha (Polynucleobacter necessarius subsp. necessarius (strain STIR1)).